We begin with the raw amino-acid sequence, 971 residues long: MLRLSLPPNVSMGFRLVTLVALLFTHVDHITADTEAETGGNETTECTGSYYCKKGVILPIWEPQDPSFGDKIARATVYFVAMVYMFLGVSIIADRFMSSIEVITSQEKEITIKKPNGETTKTTVRIWNETVSNLTLMALGSSAPEILLSVIEVCGHNFTAGDLGPSTIVGSAAFNMFIIIALCVYVVPDGETRKIKHLRVFFVTAAWSIFAYTWLYIILSVSSPGVVEVWEGLLTFFFFPICVVFAWVADRRLLFYKYVYKRYRAGKQRGMIIEHEGDRPASKTEIEMDGKVVNSHVDNFLDGALVLEVDERDQDDEEARREMARILKELKQKHPDKEIEQLIELANYQVLSQQQKSRAFYRIQATRLMTGAGNILKRHAADQARKAVSMHEVNMDVVENDPVSKVFFEQGTYQCLENCGTVALTIIRRGGDLTNTVFVDFRTEDGTANAGSDYEFTEGTVIFKPGETQKEIRVGIIDDDIFEEDENFLVHLSNVRVSSEVSEDGILDSNHVSAIACLGSPNTATITIFDDDHAGIFTFEEPVTHVSESIGIMEVKVLRTSGARGNVIIPYKTIEGTARGGGEDFEDTCGELEFQNDEIVKTISVKVIDDEEYEKNKTFFIEIGEPRLVEMSEKKALLLNELGGFTLTEGKKMYGQPVFRKVHARDHPIPSTVISISEEYDDKQPLTSKEEEERRIAEMGRPILGEHTKLEVIIEESYEFKSTVDKLIKKTNLALVVGTNSWREQFIEAITVSAGEDDDDDECGEEKLPSCFDYVMHFLTVFWKVLFAFVPPTEYWNGWACFIVSILMIGLLTAFIGDLASHFGCTIGLKDSVTAVVFVALGTSVPDTFASKVAATQDQYADASIGNVTGSNAVNVFLGIGVAWSIAAIYHAANGEQFKVSPGTLAFSVTLFTIFAFINVGVLLYRRRPEIGGELGGPRTAKLLTSSLFVLLWLLYIFFSSLEAYCHIKGF.

A signal peptide spans 1–32 (MLRLSLPPNVSMGFRLVTLVALLFTHVDHITA). The Extracellular segment spans residues 33–71 (DTEAETGGNETTECTGSYYCKKGVILPIWEPQDPSFGDK). N-linked (GlcNAc...) asparagine glycosylation occurs at N41. Residues 72 to 92 (IARATVYFVAMVYMFLGVSII) traverse the membrane as a helical segment. Residues 93–133 (ADRFMSSIEVITSQEKEITIKKPNGETTKTTVRIWNETVSN) are Cytoplasmic-facing. Residues 134–154 (LTLMALGSSAPEILLSVIEVC) traverse the membrane as a helical segment. The stretch at 138–178 (ALGSSAPEILLSVIEVCGHNFTAGDLGPSTIVGSAAFNMFI) is one Alpha-1 repeat. Over 155–167 (GHNFTAGDLGPST) the chain is Extracellular. Residue N157 is glycosylated (N-linked (GlcNAc...) asparagine). A helical transmembrane segment spans residues 168–188 (IVGSAAFNMFIIIALCVYVVP). The Cytoplasmic segment spans residues 189-201 (DGETRKIKHLRVF). The chain crosses the membrane as a helical span at residues 202-222 (FVTAAWSIFAYTWLYIILSVS). Residues 223 to 228 (SPGVVE) are Extracellular-facing. A helical transmembrane segment spans residues 229–249 (VWEGLLTFFFFPICVVFAWVA). At 250–798 (DRRLLFYKYV…FVPPTEYWNG (549 aa)) the chain is on the cytoplasmic side. The putative calmodulin-binding region stretch occupies residues 251 to 270 (RRLLFYKYVYKRYRAGKQRG). S282 and S389 each carry phosphoserine. 2 Calx-beta domains span residues 393–493 (VNMD…VHLS) and 524–624 (ATIT…IEIG). Residues E417, D453, D478, D479, I481, E483, E486, D530, D531, D532, E548, D584, D610, E611, E612, and E716 each coordinate Ca(2+). The chain crosses the membrane as a helical span at residues 799 to 819 (WACFIVSILMIGLLTAFIGDL). Residues 820 to 822 (ASH) lie on the Extracellular side of the membrane. The helical transmembrane segment at 823-843 (FGCTIGLKDSVTAVVFVALGT) threads the bilayer. An Alpha-2 repeat occupies 840–876 (ALGTSVPDTFASKVAATQDQYADASIGNVTGSNAVNV). The Cytoplasmic segment spans residues 844–872 (SVPDTFASKVAATQDQYADASIGNVTGSN). Residues 873–893 (AVNVFLGIGVAWSIAAIYHAA) traverse the membrane as a helical segment. Over 894-904 (NGEQFKVSPGT) the chain is Extracellular. The helical transmembrane segment at 905–925 (LAFSVTLFTIFAFINVGVLLY) threads the bilayer. Over 926-942 (RRRPEIGGELGGPRTAK) the chain is Cytoplasmic. A helical transmembrane segment spans residues 943-963 (LLTSSLFVLLWLLYIFFSSLE). Over 964–971 (AYCHIKGF) the chain is Extracellular.

The protein belongs to the Ca(2+):cation antiporter (CaCA) (TC 2.A.19) family. SLC8 subfamily. Detected in heart, brain cortex and hippocampus (at protein level). Cardiac sarcolemma or brain, and spleen. Expressed in all regions of the kidney, highest levels of expression in the distal convoluted tubule. Expressed throughout the CNS, in decreasing order of abundance in hippocampus, cortex, cerebellum, hypothalamus, midbrain and striatum. Expressed in numerous regions of the brain including multiple cortical layers, hippocampus, septal nuclei, thalamic nuclei, cerebellum, hypothalamus, olfactory bulb and brainstem. Also expressed in various regions of the spinal cord, ventricles and atria of the heart, lung, adrenals and kidney. Isoform 4 seems to be a predominant isoform in aorta, stomach, liver, and kidney.

It localises to the cell membrane. The protein localises to the cell projection. It is found in the dendrite. It carries out the reaction Ca(2+)(in) + 3 Na(+)(out) = Ca(2+)(out) + 3 Na(+)(in). Activated by micromolar levels of Ca(2+). Its activity is regulated as follows. Only active at low calcium concentrations. Not activated by PKC. With respect to regulation, active at all calcium levels tested. Activated by PKC. Only active at low calcium concentrations. Activated by PKC. Its function is as follows. Mediates the exchange of one Ca(2+) ion against three to four Na(+) ions across the cell membrane, and thereby contributes to the regulation of cytoplasmic Ca(2+) levels and Ca(2+)-dependent cellular processes. Contributes to Ca(2+) transport during excitation-contraction coupling in muscle. In a first phase, voltage-gated channels mediate the rapid increase of cytoplasmic Ca(2+) levels due to release of Ca(2+) stores from the endoplasmic reticulum. SLC8A1 mediates the export of Ca(2+) from the cell during the next phase, so that cytoplasmic Ca(2+) levels rapidly return to baseline. Required for normal embryonic heart development and the onset of heart contractions. The protein is Sodium/calcium exchanger 1 (Slc8a1) of Rattus norvegicus (Rat).